Consider the following 103-residue polypeptide: Large ribosomal subunit protein bL21 (103 aa).

It belongs to the bacterial ribosomal protein bL21 family. As to quaternary structure, part of the 50S ribosomal subunit. Contacts protein L20.

Its function is as follows. This protein binds to 23S rRNA in the presence of protein L20. This is Large ribosomal subunit protein bL21 from Mycolicibacterium smegmatis (strain ATCC 700084 / mc(2)155) (Mycobacterium smegmatis).